The chain runs to 437 residues: Glutamate-1-semialdehyde 2,1-aminomutase 1 (437 aa).

The residue at position 268 (Lys-268) is an N6-(pyridoxal phosphate)lysine.

It belongs to the class-III pyridoxal-phosphate-dependent aminotransferase family. HemL subfamily. As to quaternary structure, homodimer. It depends on pyridoxal 5'-phosphate as a cofactor.

The protein localises to the cytoplasm. The enzyme catalyses (S)-4-amino-5-oxopentanoate = 5-aminolevulinate. It participates in porphyrin-containing compound metabolism; protoporphyrin-IX biosynthesis; 5-aminolevulinate from L-glutamyl-tRNA(Glu): step 2/2. This chain is Glutamate-1-semialdehyde 2,1-aminomutase 1, found in Halalkalibacterium halodurans (strain ATCC BAA-125 / DSM 18197 / FERM 7344 / JCM 9153 / C-125) (Bacillus halodurans).